A 205-amino-acid chain; its full sequence is Small ribosomal subunit protein uS4 (205 aa).

The 64-residue stretch at S94–V157 folds into the S4 RNA-binding domain.

Belongs to the universal ribosomal protein uS4 family. As to quaternary structure, part of the 30S ribosomal subunit. Contacts protein S5. The interaction surface between S4 and S5 is involved in control of translational fidelity.

Functionally, one of the primary rRNA binding proteins, it binds directly to 16S rRNA where it nucleates assembly of the body of the 30S subunit. In terms of biological role, with S5 and S12 plays an important role in translational accuracy. The protein is Small ribosomal subunit protein uS4 of Rickettsia felis (strain ATCC VR-1525 / URRWXCal2) (Rickettsia azadi).